Here is a 141-residue protein sequence, read N- to C-terminus: Probable trafficking protein particle complex subunit 2 (141 aa).

This sequence belongs to the TRAPP small subunits family. Sedlin subfamily. Part of the multisubunit TRAPP (transport protein particle) complex.

The protein localises to the cytoplasm. It localises to the perinuclear region. The protein resides in the endoplasmic reticulum. Its subcellular location is the golgi apparatus. May play a role in vesicular transport from endoplasmic reticulum to Golgi. Required for the systemic spread of the RNAi response. The chain is Probable trafficking protein particle complex subunit 2 (sedl-1) from Caenorhabditis elegans.